The primary structure comprises 140 residues: Probable transport accessory protein MmpS4 (140 aa).

A helical membrane pass occupies residues 2-22; that stretch reads LMRTWIPLVILVVVIVGGFTV.

The protein belongs to the MmpS family.

Its subcellular location is the cell membrane. This is Probable transport accessory protein MmpS4 (mmpS4) from Mycobacterium bovis (strain ATCC BAA-935 / AF2122/97).